Here is a 372-residue protein sequence, read N- to C-terminus: Queuine tRNA-ribosyltransferase (372 aa).

Asp92 (proton acceptor) is an active-site residue. Substrate is bound by residues 92 to 96 (DSGGF), Asp146, Gln188, and Gly215. Residues 246-252 (GIGTLRE) are RNA binding. Asp265 serves as the catalytic Nucleophile. An RNA binding; important for wobble base 34 recognition region spans residues 270–274 (TRLGR). 4 residues coordinate Zn(2+): Cys303, Cys305, Cys308, and His334.

This sequence belongs to the queuine tRNA-ribosyltransferase family. Homodimer. Within each dimer, one monomer is responsible for RNA recognition and catalysis, while the other monomer binds to the replacement base PreQ1. The cofactor is Zn(2+).

The enzyme catalyses 7-aminomethyl-7-carbaguanine + guanosine(34) in tRNA = 7-aminomethyl-7-carbaguanosine(34) in tRNA + guanine. It functions in the pathway tRNA modification; tRNA-queuosine biosynthesis. Its function is as follows. Catalyzes the base-exchange of a guanine (G) residue with the queuine precursor 7-aminomethyl-7-deazaguanine (PreQ1) at position 34 (anticodon wobble position) in tRNAs with GU(N) anticodons (tRNA-Asp, -Asn, -His and -Tyr). Catalysis occurs through a double-displacement mechanism. The nucleophile active site attacks the C1' of nucleotide 34 to detach the guanine base from the RNA, forming a covalent enzyme-RNA intermediate. The proton acceptor active site deprotonates the incoming PreQ1, allowing a nucleophilic attack on the C1' of the ribose to form the product. After dissociation, two additional enzymatic reactions on the tRNA convert PreQ1 to queuine (Q), resulting in the hypermodified nucleoside queuosine (7-(((4,5-cis-dihydroxy-2-cyclopenten-1-yl)amino)methyl)-7-deazaguanosine). The sequence is that of Queuine tRNA-ribosyltransferase from Synechococcus sp. (strain CC9605).